The primary structure comprises 319 residues: Acetyl-coenzyme A carboxylase carboxyl transferase subunit alpha (319 aa).

One can recognise a CoA carboxyltransferase C-terminal domain in the interval 35 to 296; it reads NIDEEVHRLR…KTQLLADLAD (262 aa).

Belongs to the AccA family. As to quaternary structure, acetyl-CoA carboxylase is a heterohexamer composed of biotin carboxyl carrier protein (AccB), biotin carboxylase (AccC) and two subunits each of ACCase subunit alpha (AccA) and ACCase subunit beta (AccD).

Its subcellular location is the cytoplasm. It catalyses the reaction N(6)-carboxybiotinyl-L-lysyl-[protein] + acetyl-CoA = N(6)-biotinyl-L-lysyl-[protein] + malonyl-CoA. The protein operates within lipid metabolism; malonyl-CoA biosynthesis; malonyl-CoA from acetyl-CoA: step 1/1. Functionally, component of the acetyl coenzyme A carboxylase (ACC) complex. First, biotin carboxylase catalyzes the carboxylation of biotin on its carrier protein (BCCP) and then the CO(2) group is transferred by the carboxyltransferase to acetyl-CoA to form malonyl-CoA. This Cronobacter sakazakii (strain ATCC BAA-894) (Enterobacter sakazakii) protein is Acetyl-coenzyme A carboxylase carboxyl transferase subunit alpha.